The following is a 288-amino-acid chain: Leucine-rich repeat-containing protein 72 (288 aa).

LRR repeat units lie at residues 47–68 (DVFE…SRFK), 69–90 (KLKY…TRNY), 91–112 (CLAE…HYLP), and 113–134 (SLHI…VKEL). Residues 148-186 (NPLCQYNLYRLYIIYHLPGVELLDRNQVTEKERRSMITL) form the LRRCT domain.

The polypeptide is Leucine-rich repeat-containing protein 72 (LRRC72) (Bos taurus (Bovine)).